The chain runs to 178 residues: Large ribosomal subunit protein uL5 (178 aa).

It belongs to the universal ribosomal protein uL5 family. Part of the 50S ribosomal subunit; part of the 5S rRNA/L5/L18/L25 subcomplex. Contacts the 5S rRNA and the P site tRNA. Forms a bridge to the 30S subunit in the 70S ribosome.

Functionally, this is one of the proteins that bind and probably mediate the attachment of the 5S RNA into the large ribosomal subunit, where it forms part of the central protuberance. In the 70S ribosome it contacts protein S13 of the 30S subunit (bridge B1b), connecting the 2 subunits; this bridge is implicated in subunit movement. Contacts the P site tRNA; the 5S rRNA and some of its associated proteins might help stabilize positioning of ribosome-bound tRNAs. The chain is Large ribosomal subunit protein uL5 from Psychrobacter arcticus (strain DSM 17307 / VKM B-2377 / 273-4).